The primary structure comprises 190 residues: Putative resolvase R80 (190 aa).

Positions 11–30 (SSVLGVHQRTLYQWDKKGWI) form a DNA-binding region, H-T-H motif. Residues 61–190 (LSICYVRVSS…RNGSRKYSNK (130 aa)) form the Resolvase/invertase-type recombinase catalytic domain. Residues 67-92 (RVSSNSQKDDLERQIKFMKKKYPNHT) are a coiled coil. Ser69 acts as the O-(5'-phospho-DNA)-serine intermediate in catalysis.

The protein belongs to the site-specific recombinase resolvase family.

Functionally, resolvase catalyzes the resolution (a site-specific recombination) of the cointegrated replicon to yield the final transposition products. This chain is Putative resolvase R80, found in Acanthamoeba polyphaga mimivirus (APMV).